Consider the following 289-residue polypeptide: Bifunctional protein FolD (289 aa).

Residues 165-167 (GAS) and Ser190 each bind NADP(+).

Belongs to the tetrahydrofolate dehydrogenase/cyclohydrolase family. In terms of assembly, homodimer.

It carries out the reaction (6R)-5,10-methylene-5,6,7,8-tetrahydrofolate + NADP(+) = (6R)-5,10-methenyltetrahydrofolate + NADPH. The catalysed reaction is (6R)-5,10-methenyltetrahydrofolate + H2O = (6R)-10-formyltetrahydrofolate + H(+). The protein operates within one-carbon metabolism; tetrahydrofolate interconversion. In terms of biological role, catalyzes the oxidation of 5,10-methylenetetrahydrofolate to 5,10-methenyltetrahydrofolate and then the hydrolysis of 5,10-methenyltetrahydrofolate to 10-formyltetrahydrofolate. This Ralstonia pickettii (strain 12J) protein is Bifunctional protein FolD.